The primary structure comprises 150 residues: Viral late gene transcription factor 2 (150 aa).

This sequence belongs to the chordopoxvirinae VLTF-2 family. In terms of assembly, interacts with itself. Interacts with the late transcription factors VLTF-1.

In terms of biological role, acts with RNA polymerase to initiate transcription from late gene promoters. The protein is Viral late gene transcription factor 2 (VLTF2) of Homo sapiens (Human).